We begin with the raw amino-acid sequence, 162 residues long: Sorting nexin-3 (162 aa).

Alanine 2 carries the post-translational modification N-acetylalanine. Residues 27 to 151 (NFLEIDVSNP…HMFLQDEIID (125 aa)) enclose the PX domain. Arginine 43 carries the post-translational modification Omega-N-methylarginine. 4 residues coordinate a 1,2-diacyl-sn-glycero-3-phospho-(1D-myo-inositol-3-phosphate): arginine 70, serine 72, lysine 95, and arginine 118. Serine 72 is modified (phosphoserine). Lysine 95 is covalently cross-linked (Glycyl lysine isopeptide (Lys-Gly) (interchain with G-Cter in SUMO2)). A binds predominantly to PtdIns(P5) and weaker to PtdIns(P3) abd PtdIns(P4); involved in neurite outgrowth regulation region spans residues 147 to 162 (DEIIDKSYTPSKIRHA).

It belongs to the sorting nexin family. In terms of assembly, interacts with VPS26A, VPS29. Interacts with VPS35; the interaction with VPS35 is direct. The association with the retromer CSC subcomplex subunits is proposed to represent a functional distinct retromer variant described as SNX3-retromer complex. Interacts with USP10 and SCNN1A. Interacts with TRFC. Interacts with SNX8; 2 molecules of SNX8 seems to associate with one molecule of SNX3. Interacts with PTPRU. Interacts with MON2 and DOP1B. In terms of processing, ubiquitinated, leading to its proteasomal degradation. Deubiquitinated by USP10. As to expression, highly expressed in developing red cells and hematopoietic tissues.

The protein localises to the early endosome. It is found in the cytoplasmic vesicle. Its subcellular location is the phagosome. In terms of biological role, phosphoinositide-binding protein required for multivesicular body formation. Specifically binds phosphatidylinositol 3-phosphate (PtdIns(P3)). Can also bind phosphatidylinositol 4-phosphate (PtdIns(P4)), phosphatidylinositol 5-phosphate (PtdIns(P5)) and phosphatidylinositol 3,5-biphosphate (PtdIns(3,5)P2). Plays a role in protein transport between cellular compartments. Together with RAB7A facilitates endosome membrane association of the retromer cargo-selective subcomplex (CSC). May act in part as component of the SNX3-retromer complex which mediates the retrograde endosome-to-TGN transport of WLS distinct from the SNX-BAR retromer pathway. Promotes stability and cell surface expression of epithelial sodium channel (ENAC) subunits SCNN1A and SCNN1G. Not involved in EGFR degradation. Involved in the regulation of phagocytosis in dendritic cells possibly by regulating EEA1 recruitment to the nascent phagosomes. Involved in iron homeostasis through regulation of endocytic recycling of the transferrin receptor Tfrc presuambly by delivering the transferrin:transferrin receptor complex to recycling endosomes; the function may involve the CSC retromer subcomplex. Involved in regulation of neurite outgrowth in primary neurons. This Mus musculus (Mouse) protein is Sorting nexin-3 (Snx3).